The primary structure comprises 550 residues: MTTKLIKHGSKAREQMLEGIDILADAVKVTLGPKGRNVLIEQSFGAPKITKDGVTVAKSIELKDKIKNAGAQLLKSAATKAAEVAGDGTTTATVLARALAREGNKLVAAGYNPMDLKRGMDLAVNAVVEEIKRSSKKINSQEEIAQVGTISSNGDKEIGEKIAKAMEEVGKEGVITVEEAKNFSFDVEVVKGMMFDRGYLSPYFVTNSEKMVAELENPFILLFEKKLSNLQPMLPILEAVVQSQRPLLIIAEDVEGEALATLVVNRLRGGLKVAAVKAPGFGDRRKAMMEDIAILTKGELITEDLGMKLENVNIKNLGTAKRVTISKENTVIVDGNGDKKNIEDRVLQIKSQIAETTSDYDKEKLQERLAKLSGGVAVLKVGGATEVEVKERKDRVEDALAATRAAVEEGVVAGGGVTLLHASQTLTKLKVENKDQQAGIEIVIEALKDPLKQIVKNAGENGGVVVGKLLEHNDKNYGFNAQDMQYVDMIKAGIIDPAKVVRTALQDAASVASLIITTETLIVDEPSDKEEPMPMRGGMGGMGGMGGMDF.

ATP-binding positions include 30–33 (TLGP), Lys-51, 87–91 (DGTTT), Gly-415, and Asp-496.

Belongs to the chaperonin (HSP60) family. In terms of assembly, forms a cylinder of 14 subunits composed of two heptameric rings stacked back-to-back. Interacts with the co-chaperonin GroES.

It is found in the cytoplasm. It catalyses the reaction ATP + H2O + a folded polypeptide = ADP + phosphate + an unfolded polypeptide.. Functionally, together with its co-chaperonin GroES, plays an essential role in assisting protein folding. The GroEL-GroES system forms a nano-cage that allows encapsulation of the non-native substrate proteins and provides a physical environment optimized to promote and accelerate protein folding. The protein is Chaperonin GroEL of Rickettsia prowazekii (strain Madrid E).